The chain runs to 484 residues: Cysteine--tRNA ligase (484 aa).

Residue Cys29 participates in Zn(2+) binding. A 'HIGH' region motif is present at residues 31–41 (ATVQGMPHVGH). Zn(2+) contacts are provided by Cys227, His252, and Glu256. The short motif at 283 to 287 (KMSKS) is the 'KMSKS' region element. Lys286 contributes to the ATP binding site.

It belongs to the class-I aminoacyl-tRNA synthetase family. In terms of assembly, monomer. Requires Zn(2+) as cofactor.

The protein resides in the cytoplasm. It catalyses the reaction tRNA(Cys) + L-cysteine + ATP = L-cysteinyl-tRNA(Cys) + AMP + diphosphate. The polypeptide is Cysteine--tRNA ligase (Paenarthrobacter aurescens (strain TC1)).